A 450-amino-acid chain; its full sequence is Phosphoglucosamine mutase (450 aa).

Ser-102 serves as the catalytic Phosphoserine intermediate. Residues Ser-102, Asp-243, Asp-245, and Asp-247 each coordinate Mg(2+). Phosphoserine is present on Ser-102.

The protein belongs to the phosphohexose mutase family. It depends on Mg(2+) as a cofactor. Post-translationally, activated by phosphorylation.

The enzyme catalyses alpha-D-glucosamine 1-phosphate = D-glucosamine 6-phosphate. In terms of biological role, catalyzes the conversion of glucosamine-6-phosphate to glucosamine-1-phosphate. The sequence is that of Phosphoglucosamine mutase from Rhizobium leguminosarum bv. trifolii (strain WSM2304).